The primary structure comprises 577 residues: MSQVQVQVQNPSAALSGSQILNKNQSLLSQPLMSIPSTTSSLPSENAGRPIQNSALPSASITSTSAAAESITPTVELNALCMKLGKKPMYKPVDPYSRMQSTYNYNMRGGAYPPRYFYPFPVPPLLYQVELSVGGQQFNGKGKTRQAAKHDAAAKALRILQNEPLPERLEVNGRESEEENLNKSEISQVFEIALKRNLPVNFEVARESGPPHMKNFVTKVSVGEFVGEGEGKSKKISKKNAAIAVLEELKKLPPLPAVERVKPRIKKKTKPIVKPQTSPEYGQGINPISRLAQIQQAKKEKEPEYTLLTERGLPRRREFVMQVKVGNHTAEGTGTNKKVAKRNAAENMLEILGFKVPQAQPTKPALKSEEKTPIKKPGDGRKVTFFEPGSGDENGTSNKEDEFRMPYLSHQQLPAGILPMVPEVAQAVGVSQGHHTKDFTRAAPNPAKATVTAMIARELLYGGTSPTAETILKNNISSGHVPHGPLTRPSEQLDYLSRVQGFQVEYKDFPKNNKNEFVSLINCSSQPPLISHGIGKDVESCHDMAALNILKLLSELDQQSTEMPRTGNGPMSVCGRC.

S2 is modified (N-acetylserine). The span at 34-44 (SIPSTTSSLPS) shows a compositional bias: polar residues. The interval 34 to 55 (SIPSTTSSLPSENAGRPIQNSA) is disordered. The DRBM 1 domain occupies 72 to 162 (TPTVELNALC…AAKALRILQN (91 aa)). R108 carries the post-translational modification Asymmetric dimethylarginine. R115 carries the asymmetric dimethylarginine; alternate modification. An Omega-N-methylarginine; alternate modification is found at R115. S176 bears the Phosphoserine mark. Residues 184–251 (SEISQVFEIA…AIAVLEELKK (68 aa)) form the DRBM 2 domain. Position 278 is a phosphoserine (S278). Residues 286–354 (NPISRLAQIQ…AENMLEILGF (69 aa)) enclose the DRBM 3 domain. Residues 360 to 397 (QPTKPALKSEEKTPIKKPGDGRKVTFFEPGSGDENGTS) form a disordered region. Basic and acidic residues predominate over residues 366 to 384 (LKSEEKTPIKKPGDGRKVT). Position 390 is a phosphoserine (S390).

In terms of assembly, binds tubulin. Binds with low affinity single-stranded RNA or DNA homopolymers. Interacts with CASC3 in an RNA-dependent manner. Identified in a mRNP complex, at least composed of DHX9, DDX3X, ELAVL1, HNRNPU, IGF2BP1, ILF3, PABPC1, PCBP2, PTBP2, STAU1, STAU2, SYNCRIP and YBX1. (Microbial infection) Interacts with HERV-K rec and gag proteins. As to quaternary structure, (Microbial infection) Interacts with HIV-1 GAG polyprotein. In terms of assembly, (Microbial infection) Interacts with influenza virus NS1 protein. (Microbial infection) Interacts with Ebola virus NP, VP30 and VP35. As to expression, widely expressed. Expressed in brain, pancreas, heart, skeletal muscles, liver, lung, kidney and placenta.

It is found in the cytoplasm. The protein localises to the rough endoplasmic reticulum. Its function is as follows. Binds double-stranded RNA (regardless of the sequence) and tubulin. May play a role in specific positioning of mRNAs at given sites in the cell by cross-linking cytoskeletal and RNA components, and in stimulating their translation at the site. (Microbial infection) Plays a role in virus particles production of many viruses including of HIV-1, HERV-K, ebola virus and influenza virus. Acts by interacting with various viral proteins involved in particle budding process. The polypeptide is Double-stranded RNA-binding protein Staufen homolog 1 (STAU1) (Homo sapiens (Human)).